A 493-amino-acid chain; its full sequence is Lysine--tRNA ligase (493 aa).

Residues Glu-400 and Glu-407 each contribute to the Mg(2+) site.

The protein belongs to the class-II aminoacyl-tRNA synthetase family. As to quaternary structure, homodimer. It depends on Mg(2+) as a cofactor.

The protein resides in the cytoplasm. The enzyme catalyses tRNA(Lys) + L-lysine + ATP = L-lysyl-tRNA(Lys) + AMP + diphosphate. This Syntrophomonas wolfei subsp. wolfei (strain DSM 2245B / Goettingen) protein is Lysine--tRNA ligase.